The sequence spans 518 residues: Probable carboxypeptidase 2 (518 aa).

The first 21 residues, 1 to 21 (MVAYHLLTLISLGLGSHCASA), serve as a signal peptide directing secretion. A glycan (N-linked (GlcNAc...) asparagine) is linked at N46. Residues 53–76 (PAFTSPGTVPRGFSDGTSGPTRDE) are disordered. The 281-residue stretch at 71–351 (GPTRDETMEG…VMAKSILQTA (281 aa)) folds into the Peptidase M14 domain. N116 is a glycosylation site (N-linked (GlcNAc...) asparagine). Zn(2+)-binding residues include H136, E139, and H224. The active-site Proton donor/acceptor is E322. N393 and N459 each carry an N-linked (GlcNAc...) asparagine glycan.

This sequence belongs to the peptidase M14 family. It depends on Zn(2+) as a cofactor.

The protein localises to the secreted. In terms of biological role, extracellular metalloprotease that contributes to pathogenicity. This is Probable carboxypeptidase 2 (MCPB) from Trichophyton verrucosum (strain HKI 0517).